The chain runs to 73 residues: UPF0235 protein LBL_1291 (73 aa).

It belongs to the UPF0235 family.

In Leptospira borgpetersenii serovar Hardjo-bovis (strain L550), this protein is UPF0235 protein LBL_1291.